Here is a 289-residue protein sequence, read N- to C-terminus: Transcriptional regulator Rob (289 aa).

Positions Arg8–Ser106 constitute an HTH araC/xylS-type domain. DNA-binding regions (H-T-H motif) lie at residues Asp25–Thr46 and Ile73–Phe96.

Transcriptional regulator. Represses transcription of genes belonging to the flagellar regulon, including flhD, flhB and fliC; probably thereby leading to repression of motility. Binds to regulatory regions of target genes, including the promoters of the flhDC operon and of P-type ATPase mgtA. Involved in post-transcriptional regulation of expression. Represses expression of the flhDC operon in a post-transcriptional manner. Binds to the right arm of the replication origin oriC of the chromosome. Rob binding may influence the formation of the nucleoprotein structure, required for oriC function in the initiation of replication. The polypeptide is Transcriptional regulator Rob (Salmonella typhimurium (strain LT2 / SGSC1412 / ATCC 700720)).